Reading from the N-terminus, the 306-residue chain is D-alanine--D-alanine ligase (306 aa).

An ATP-grasp domain is found at 107–300; that stretch reads KEAYRAAGLP…FGQLCAWMVE (194 aa). 134–184 serves as a coordination point for ATP; the sequence is MQPPYVVKPYNEGSSVGVYIVTEAANGPPVLAPDLPATLMVEEYVPGRELS. Aspartate 251, glutamate 267, and asparagine 269 together coordinate Mg(2+).

This sequence belongs to the D-alanine--D-alanine ligase family. It depends on Mg(2+) as a cofactor. Mn(2+) is required as a cofactor.

Its subcellular location is the cytoplasm. It carries out the reaction 2 D-alanine + ATP = D-alanyl-D-alanine + ADP + phosphate + H(+). It participates in cell wall biogenesis; peptidoglycan biosynthesis. In terms of biological role, cell wall formation. The sequence is that of D-alanine--D-alanine ligase from Ruegeria pomeroyi (strain ATCC 700808 / DSM 15171 / DSS-3) (Silicibacter pomeroyi).